We begin with the raw amino-acid sequence, 62 residues long: Large ribosomal subunit protein uL29 (62 aa).

It belongs to the universal ribosomal protein uL29 family.

This chain is Large ribosomal subunit protein uL29, found in Acholeplasma laidlawii (strain PG-8A).